The following is a 1070-amino-acid chain: Inactive tyrosine-protein kinase 7 (1070 aa).

Residues 1-30 (MGAARGSPARPRRLPLLSVLLLPLLGGTQT) form the signal peptide. 7 Ig-like C2-type domains span residues 31-120 (AIVF…ASFN), 128-218 (PVVL…FTLS), 225-317 (ARVV…EATL), 309-407 (PPII…VNIT), 412-497 (PSWL…ARVQ), 503-586 (KFTP…HVQL), and 578-680 (GQIR…APLY). Residues 31 to 704 (AIVFIKQPSS…SPPPYKMIQT (674 aa)) are Extracellular-facing. A disulfide bond links Cys-53 and Cys-101. N-linked (GlcNAc...) asparagine glycosylation is found at Asn-116, Asn-175, Asn-184, Asn-214, Asn-268, and Asn-283. Cys-150 and Cys-200 are oxidised to a cystine. 2 cysteine pairs are disulfide-bonded: Cys-246/Cys-301 and Cys-343/Cys-391. Asn-405, Asn-463, Asn-567, and Asn-646 each carry an N-linked (GlcNAc...) asparagine glycan. 3 cysteine pairs are disulfide-bonded: Cys-433-Cys-481, Cys-524-Cys-570, and Cys-613-Cys-664. Residues 705–725 (IGLSVGAAVAYIIAVLGLMFY) form a helical membrane-spanning segment. At 726–1070 (CKKRCKAKRL…LGDSTVDSKP (345 aa)) the chain is on the cytoplasmic side. 2 disordered regions span residues 736–759 (QKQP…NGQP) and 773–793 (GSGP…HFPR). The segment at 794-1070 (SSLQPITTLG…LGDSTVDSKP (277 aa)) is interaction with CTNNB1. Residues 796 to 1066 (LQPITTLGKS…IASALGDSTV (271 aa)) enclose the Protein kinase; inactive domain. At Ser-1064 the chain carries Phosphoserine.

It belongs to the protein kinase superfamily. Tyr protein kinase family. Insulin receptor subfamily. In terms of assembly, interacts with CTNNB1. Post-translationally, MMP14 cleaves PTK7 between Pro-621 and Leu-622 generating an N-terminal soluble (70 kDa) fragment and a membrane C-terminal (50 kDa) fragment. Proteolysis by MMP14 regulates PTK7 function in non-canonical Wnt signaling pathway. In terms of tissue distribution, highly expressed in lung, liver, pancreas, kidney, placenta and melanocytes. Weakly expressed in thyroid gland, ovary, brain, heart and skeletal muscle. Also expressed in erythroleukemia cells. But not expressed in colon.

Its subcellular location is the membrane. The protein localises to the cell junction. Its function is as follows. Inactive tyrosine kinase involved in Wnt signaling pathway. Component of both the non-canonical (also known as the Wnt/planar cell polarity signaling) and the canonical Wnt signaling pathway. Functions in cell adhesion, cell migration, cell polarity, proliferation, actin cytoskeleton reorganization and apoptosis. Has a role in embryogenesis, epithelial tissue organization and angiogenesis. The sequence is that of Inactive tyrosine-protein kinase 7 (PTK7) from Homo sapiens (Human).